We begin with the raw amino-acid sequence, 682 residues long: Methionine--tRNA ligase (682 aa).

A 'HIGH' region motif is present at residues 15-25 (PYANGAIHLGH). Zn(2+)-binding residues include C146, C149, C159, and C162. A 'KMSKS' region motif is present at residues 331-335 (KMSKS). K334 provides a ligand contact to ATP. The tRNA-binding domain maps to 580 to 682 (DFAKLDLRVA…QGVKPGMQVK (103 aa)).

This sequence belongs to the class-I aminoacyl-tRNA synthetase family. MetG type 1 subfamily. As to quaternary structure, homodimer. Zn(2+) serves as cofactor.

Its subcellular location is the cytoplasm. The catalysed reaction is tRNA(Met) + L-methionine + ATP = L-methionyl-tRNA(Met) + AMP + diphosphate. In terms of biological role, is required not only for elongation of protein synthesis but also for the initiation of all mRNA translation through initiator tRNA(fMet) aminoacylation. This is Methionine--tRNA ligase from Pasteurella multocida (strain Pm70).